Consider the following 374-residue polypeptide: 4-hydroxy-3-methylbut-2-en-1-yl diphosphate synthase (flavodoxin) (374 aa).

The [4Fe-4S] cluster site is built by cysteine 272, cysteine 275, cysteine 307, and glutamate 314.

The protein belongs to the IspG family. The cofactor is [4Fe-4S] cluster.

The enzyme catalyses (2E)-4-hydroxy-3-methylbut-2-enyl diphosphate + oxidized [flavodoxin] + H2O + 2 H(+) = 2-C-methyl-D-erythritol 2,4-cyclic diphosphate + reduced [flavodoxin]. It functions in the pathway isoprenoid biosynthesis; isopentenyl diphosphate biosynthesis via DXP pathway; isopentenyl diphosphate from 1-deoxy-D-xylulose 5-phosphate: step 5/6. Functionally, converts 2C-methyl-D-erythritol 2,4-cyclodiphosphate (ME-2,4cPP) into 1-hydroxy-2-methyl-2-(E)-butenyl 4-diphosphate. The protein is 4-hydroxy-3-methylbut-2-en-1-yl diphosphate synthase (flavodoxin) of Acidiphilium cryptum (strain JF-5).